The chain runs to 202 residues: Peptide deformylase (202 aa).

Residues Met1 to Glu24 are disordered. The Fe cation site is built by Cys121 and His163. Glu164 is an active-site residue. Residue His167 coordinates Fe cation.

Belongs to the polypeptide deformylase family. It depends on Fe(2+) as a cofactor.

The catalysed reaction is N-terminal N-formyl-L-methionyl-[peptide] + H2O = N-terminal L-methionyl-[peptide] + formate. Removes the formyl group from the N-terminal Met of newly synthesized proteins. Requires at least a dipeptide for an efficient rate of reaction. N-terminal L-methionine is a prerequisite for activity but the enzyme has broad specificity at other positions. The polypeptide is Peptide deformylase (Prochlorococcus marinus (strain NATL1A)).